A 152-amino-acid polypeptide reads, in one-letter code: Xanthine-guanine phosphoribosyltransferase (152 aa).

5-phospho-alpha-D-ribose 1-diphosphate-binding positions include 37–38 (RG) and 88–96 (DDLVDTGNT). Asp-89 contacts Mg(2+). Positions 92 and 135 each coordinate guanine. 2 residues coordinate xanthine: Asp-92 and Ile-135. GMP is bound by residues 92–96 (DTGNT) and 134–135 (WI).

This sequence belongs to the purine/pyrimidine phosphoribosyltransferase family. XGPT subfamily. Homotetramer. The cofactor is Mg(2+).

The protein resides in the cell inner membrane. The catalysed reaction is GMP + diphosphate = guanine + 5-phospho-alpha-D-ribose 1-diphosphate. It catalyses the reaction XMP + diphosphate = xanthine + 5-phospho-alpha-D-ribose 1-diphosphate. The enzyme catalyses IMP + diphosphate = hypoxanthine + 5-phospho-alpha-D-ribose 1-diphosphate. It functions in the pathway purine metabolism; GMP biosynthesis via salvage pathway; GMP from guanine: step 1/1. The protein operates within purine metabolism; XMP biosynthesis via salvage pathway; XMP from xanthine: step 1/1. Functionally, purine salvage pathway enzyme that catalyzes the transfer of the ribosyl-5-phosphate group from 5-phospho-alpha-D-ribose 1-diphosphate (PRPP) to the N9 position of the 6-oxopurines guanine and xanthine to form the corresponding ribonucleotides GMP (guanosine 5'-monophosphate) and XMP (xanthosine 5'-monophosphate), with the release of PPi. To a lesser extent, also acts on hypoxanthine. The chain is Xanthine-guanine phosphoribosyltransferase from Actinobacillus succinogenes (strain ATCC 55618 / DSM 22257 / CCUG 43843 / 130Z).